The following is a 150-amino-acid chain: MALKSLVVLPLLVLVLLLVRVQPSLGKESAAAKFERQHMDSGNSPSSSSNYCNLMMCCRKMTQGKCKPVNTFVHESLADVKAVCSQKKVTCKNGQTNCYQSKSTMRITDCRETGSSKYPNCAYKTTQVEKHIIVACGGKPSVPVHFDASV.

The signal sequence occupies residues 1–26 (MALKSLVVLPLLVLVLLLVRVQPSLG). Substrate contacts are provided by Lys33 and Arg36. The active-site Proton acceptor is the His38. 4 cysteine pairs are disulfide-bonded: Cys52–Cys110, Cys66–Cys121, Cys84–Cys136, and Cys91–Cys98. Substrate-binding positions include 67–71 (KPVNT) and Lys92. Deamidated asparagine; by deterioration is present on Asn93. Position 111 (Arg111) interacts with substrate. The Proton donor role is filled by His145.

The protein belongs to the pancreatic ribonuclease family. As to quaternary structure, homodimer; disulfide-linked. In terms of tissue distribution, seminal plasma. Can reach 3% of the protein content of this fluid.

It is found in the secreted. The catalysed reaction is an [RNA] containing cytidine + H2O = an [RNA]-3'-cytidine-3'-phosphate + a 5'-hydroxy-ribonucleotide-3'-[RNA].. It carries out the reaction an [RNA] containing uridine + H2O = an [RNA]-3'-uridine-3'-phosphate + a 5'-hydroxy-ribonucleotide-3'-[RNA].. Its activity is regulated as follows. Allosteric regulation by both substrate and reaction products. Its function is as follows. This enzyme hydrolyzes both single- and double-stranded RNA. This is Seminal ribonuclease (SRN) from Bos taurus (Bovine).